The sequence spans 847 residues: Histidine decarboxylase (847 aa).

Residues Phe-80 and His-193 each coordinate substrate. Residue Lys-304 is modified to N6-(pyridoxal phosphate)lysine. Positions 575–605 (GNGATRTSTTNSYGHTTSAAQANSERQASIQ) are enriched in polar residues. 3 disordered regions span residues 575-662 (GNGA…RSSP), 769-798 (QSQS…MSSL), and 813-847 (SQPM…MESL). Acidic residues predominate over residues 606-616 (EDNEESPEETE). 2 stretches are compositionally biased toward low complexity: residues 634 to 657 (SLST…TQSS) and 769 to 787 (QSQS…LSGG). Polar residues predominate over residues 832–847 (DSDATVCSTTSSMESL).

This sequence belongs to the group II decarboxylase family. Homodimer. Pyridoxal 5'-phosphate serves as cofactor. In terms of tissue distribution, localized primarily to the photoreceptors, in the eye.

The catalysed reaction is L-histidine + H(+) = histamine + CO2. In terms of biological role, required in photoreceptor transmitter synthesis. Catlayzes the conversion of L-histidine to histamine. The polypeptide is Histidine decarboxylase (Hdc) (Drosophila melanogaster (Fruit fly)).